We begin with the raw amino-acid sequence, 338 residues long: Ketol-acid reductoisomerase (NADP(+)) (338 aa).

In terms of domain architecture, KARI N-terminal Rossmann spans 1 to 181; sequence MKVYYDKDAD…GGTKGGVIET (181 aa). NADP(+)-binding positions include 24-27, R47, and S52; that span reads YGSQ. H107 is an active-site residue. G133 serves as a coordination point for NADP(+). In terms of domain architecture, KARI C-terminal knotted spans 182–327; the sequence is NFREETETDL…SQLRAMMPWI (146 aa). D190, E194, E226, and E230 together coordinate Mg(2+). S251 provides a ligand contact to substrate.

Belongs to the ketol-acid reductoisomerase family. It depends on Mg(2+) as a cofactor.

It carries out the reaction (2R)-2,3-dihydroxy-3-methylbutanoate + NADP(+) = (2S)-2-acetolactate + NADPH + H(+). The catalysed reaction is (2R,3R)-2,3-dihydroxy-3-methylpentanoate + NADP(+) = (S)-2-ethyl-2-hydroxy-3-oxobutanoate + NADPH + H(+). Its pathway is amino-acid biosynthesis; L-isoleucine biosynthesis; L-isoleucine from 2-oxobutanoate: step 2/4. It participates in amino-acid biosynthesis; L-valine biosynthesis; L-valine from pyruvate: step 2/4. In terms of biological role, involved in the biosynthesis of branched-chain amino acids (BCAA). Catalyzes an alkyl-migration followed by a ketol-acid reduction of (S)-2-acetolactate (S2AL) to yield (R)-2,3-dihydroxy-isovalerate. In the isomerase reaction, S2AL is rearranged via a Mg-dependent methyl migration to produce 3-hydroxy-3-methyl-2-ketobutyrate (HMKB). In the reductase reaction, this 2-ketoacid undergoes a metal-dependent reduction by NADPH to yield (R)-2,3-dihydroxy-isovalerate. In Methylobacillus flagellatus (strain ATCC 51484 / DSM 6875 / VKM B-1610 / KT), this protein is Ketol-acid reductoisomerase (NADP(+)).